The chain runs to 319 residues: Acetyl-coenzyme A carboxylase carboxyl transferase subunit alpha (319 aa).

In terms of domain architecture, CoA carboxyltransferase C-terminal spans 35-296; the sequence is NLDEEVQRLR…KAQLLADLAD (262 aa).

The protein belongs to the AccA family. Acetyl-CoA carboxylase is a heterohexamer composed of biotin carboxyl carrier protein (AccB), biotin carboxylase (AccC) and two subunits each of ACCase subunit alpha (AccA) and ACCase subunit beta (AccD).

Its subcellular location is the cytoplasm. It carries out the reaction N(6)-carboxybiotinyl-L-lysyl-[protein] + acetyl-CoA = N(6)-biotinyl-L-lysyl-[protein] + malonyl-CoA. Its pathway is lipid metabolism; malonyl-CoA biosynthesis; malonyl-CoA from acetyl-CoA: step 1/1. Functionally, component of the acetyl coenzyme A carboxylase (ACC) complex. First, biotin carboxylase catalyzes the carboxylation of biotin on its carrier protein (BCCP) and then the CO(2) group is transferred by the carboxyltransferase to acetyl-CoA to form malonyl-CoA. This is Acetyl-coenzyme A carboxylase carboxyl transferase subunit alpha from Erwinia tasmaniensis (strain DSM 17950 / CFBP 7177 / CIP 109463 / NCPPB 4357 / Et1/99).